The chain runs to 481 residues: UDP-N-acetylmuramate--L-alanine ligase (481 aa).

ATP is bound at residue 115 to 121 (GTHGKTT).

This sequence belongs to the MurCDEF family.

The protein localises to the cytoplasm. It catalyses the reaction UDP-N-acetyl-alpha-D-muramate + L-alanine + ATP = UDP-N-acetyl-alpha-D-muramoyl-L-alanine + ADP + phosphate + H(+). It functions in the pathway cell wall biogenesis; peptidoglycan biosynthesis. Cell wall formation. In Rhodospirillum rubrum (strain ATCC 11170 / ATH 1.1.1 / DSM 467 / LMG 4362 / NCIMB 8255 / S1), this protein is UDP-N-acetylmuramate--L-alanine ligase.